A 129-amino-acid chain; its full sequence is Large ribosomal subunit protein bL20 (129 aa).

The protein belongs to the bacterial ribosomal protein bL20 family.

In terms of biological role, binds directly to 23S ribosomal RNA and is necessary for the in vitro assembly process of the 50S ribosomal subunit. It is not involved in the protein synthesizing functions of that subunit. This Mycobacterium leprae (strain Br4923) protein is Large ribosomal subunit protein bL20.